The following is a 302-amino-acid chain: Quinolinate synthase (302 aa).

Residues histidine 24 and serine 41 each coordinate iminosuccinate. Residue cysteine 86 coordinates [4Fe-4S] cluster. Residues 112–114 (YVN) and serine 129 contribute to the iminosuccinate site. Position 171 (cysteine 171) interacts with [4Fe-4S] cluster. Residues 197–199 (HPE) and threonine 214 contribute to the iminosuccinate site. Residue cysteine 259 coordinates [4Fe-4S] cluster.

It belongs to the quinolinate synthase family. Type 2 subfamily. It depends on [4Fe-4S] cluster as a cofactor.

The protein resides in the cytoplasm. It catalyses the reaction iminosuccinate + dihydroxyacetone phosphate = quinolinate + phosphate + 2 H2O + H(+). Its pathway is cofactor biosynthesis; NAD(+) biosynthesis; quinolinate from iminoaspartate: step 1/1. Its function is as follows. Catalyzes the condensation of iminoaspartate with dihydroxyacetone phosphate to form quinolinate. The polypeptide is Quinolinate synthase (Dehalococcoides mccartyi (strain CBDB1)).